A 44-amino-acid polypeptide reads, in one-letter code: Thymosin beta (44 aa).

The segment covering M1 to T17 has biased composition (basic and acidic residues). Positions M1 to D44 are disordered. A compositionally biased stretch (low complexity) spans K19 to K32. Residues E33–D44 show a composition bias toward basic and acidic residues.

Belongs to the thymosin beta family.

The protein localises to the cytoplasm. Its subcellular location is the cytoskeleton. Functionally, plays an important role in the organization of the cytoskeleton. Binds to and sequesters actin monomers (G actin) and therefore inhibits actin polymerization. The chain is Thymosin beta from Gillichthys mirabilis (Long-jawed mudsucker).